Consider the following 298-residue polypeptide: Lipoyl synthase (298 aa).

Residues cysteine 40, cysteine 45, cysteine 51, cysteine 67, cysteine 71, cysteine 74, and serine 280 each coordinate [4Fe-4S] cluster. The Radical SAM core domain maps to 53-269 (AVRKTATFMI…KEIALSKGFS (217 aa)).

It belongs to the radical SAM superfamily. Lipoyl synthase family. The cofactor is [4Fe-4S] cluster.

It is found in the cytoplasm. The enzyme catalyses [[Fe-S] cluster scaffold protein carrying a second [4Fe-4S](2+) cluster] + N(6)-octanoyl-L-lysyl-[protein] + 2 oxidized [2Fe-2S]-[ferredoxin] + 2 S-adenosyl-L-methionine + 4 H(+) = [[Fe-S] cluster scaffold protein] + N(6)-[(R)-dihydrolipoyl]-L-lysyl-[protein] + 4 Fe(3+) + 2 hydrogen sulfide + 2 5'-deoxyadenosine + 2 L-methionine + 2 reduced [2Fe-2S]-[ferredoxin]. It participates in protein modification; protein lipoylation via endogenous pathway; protein N(6)-(lipoyl)lysine from octanoyl-[acyl-carrier-protein]. Its function is as follows. Catalyzes the radical-mediated insertion of two sulfur atoms into the C-6 and C-8 positions of the octanoyl moiety bound to the lipoyl domains of lipoate-dependent enzymes, thereby converting the octanoylated domains into lipoylated derivatives. This chain is Lipoyl synthase, found in Bacillus cereus (strain B4264).